A 244-amino-acid chain; its full sequence is Type III pantothenate kinase (244 aa).

An ATP-binding site is contributed by 9 to 16; the sequence is DAGNSSLK. Residues Tyr90 and 97–100 contribute to the substrate site; that span reads GVDR. Asp99 serves as the catalytic Proton acceptor. Thr122 is a binding site for ATP. Thr172 contributes to the substrate binding site.

Belongs to the type III pantothenate kinase family. Homodimer. It depends on NH4(+) as a cofactor. K(+) is required as a cofactor.

Its subcellular location is the cytoplasm. The catalysed reaction is (R)-pantothenate + ATP = (R)-4'-phosphopantothenate + ADP + H(+). It participates in cofactor biosynthesis; coenzyme A biosynthesis; CoA from (R)-pantothenate: step 1/5. In terms of biological role, catalyzes the phosphorylation of pantothenate (Pan), the first step in CoA biosynthesis. The polypeptide is Type III pantothenate kinase (Thiobacillus denitrificans (strain ATCC 25259 / T1)).